A 604-amino-acid polypeptide reads, in one-letter code: Inositol-3-phosphate synthase 1 (604 aa).

Residues G88, G89, N90, N91, D163, S198, V199, Q210, R213, S251, G252, N253, T254, S303, D327, L328, T330, N361, N362, D363, K376, G456, D457, D485, and S486 each contribute to the NAD(+) site.

It belongs to the myo-inositol 1-phosphate synthase family. It depends on NAD(+) as a cofactor.

The enzyme catalyses D-glucose 6-phosphate = 1D-myo-inositol 3-phosphate. The protein operates within polyol metabolism; myo-inositol biosynthesis; myo-inositol from D-glucose 6-phosphate: step 1/2. In terms of biological role, key enzyme in myo-inositol biosynthesis pathway that catalyzes the conversion of glucose 6-phosphate to 1-myo-inositol 1-phosphate in a NAD-dependent manner. Rate-limiting enzyme in the synthesis of all inositol-containing compounds. De novo-synthesized myo-inositol is essential for incorporation into GPI (glycosylphosphatidylinositol) glycolipids during intra-erythrocytic development. The chain is Inositol-3-phosphate synthase 1 from Plasmodium falciparum (isolate 3D7).